We begin with the raw amino-acid sequence, 618 residues long: Sodium/iodide cotransporter (618 aa).

The Extracellular portion of the chain corresponds to 1–14; the sequence is MEGAEAGARATFGA. The helical transmembrane segment at 15-31 threads the bilayer; sequence WDYGVFATMLLVSTGIG. Residues 32 to 56 are Cytoplasmic-facing; it reads LWVGLARGGQRSADDFFTGGRQLAA. Residues 57 to 80 form a discontinuously helical membrane-spanning segment; the sequence is VPVGLSLAASFMSAVQVLGVPAEA. The Na(+) site is built by Ser69, Val71, and Gln72. Val76 is an iodide binding site. The Extracellular portion of the chain corresponds to 81 to 84; the sequence is ARYG. The helical transmembrane segment at 85-105 threads the bilayer; sequence LKFLWMCAGQLLNSLLTAFLF. Position 90 (Met90) interacts with iodide. The Cytoplasmic segment spans residues 106 to 130; it reads LPIFYRLGLTSTYQYLELRFSRAVR. A helical membrane pass occupies residues 131-157; the sequence is LCGTLQYLVATMLYTGIVIYAPALILN. Tyr144 is a Na(+) binding site. Over 158–163 the chain is Extracellular; the sequence is QVTGLD. A helical transmembrane segment spans residues 164–181; sequence IWASLLSTGIICTLYTTV. At 182-189 the chain is on the cytoplasmic side; sequence GGMKAVVW. Residues 190–208 form a helical membrane-spanning segment; the sequence is TDVFQVVVMLVGFWVILAR. At 209-243 the chain is on the extracellular side; the sequence is GVILLGGPRNVLSLAQNHSRINLMDFDPDPRSRYT. The chain crosses the membrane as a discontinuously helical span at residues 244–266; that stretch reads FWTFIVGGTLVWLSMYGVNQAQV. Trp255 is an iodide binding site. Met258 is a Na(+) binding site. Topologically, residues 267 to 278 are cytoplasmic; the sequence is QRYVACHTEGKA. The helical transmembrane segment at 279-301 threads the bilayer; the sequence is KLALLVNQLGLFLIVASAACCGI. The Extracellular segment spans residues 302 to 335; the sequence is VMFVYYKDCDPLLTGRISAPDQYMPLLVLDIFED. A helical transmembrane segment spans residues 336 to 363; it reads LPGVPGLFLACAYSGTLSTASTSINAMA. Over 364-386 the chain is Cytoplasmic; the sequence is AVTVEDLIKPRMPGLAPRKLVFI. The helical transmembrane segment at 387–408 threads the bilayer; the sequence is SKGLSFIYGSACLTVAALSSLL. Over 409 to 411 the chain is Extracellular; that stretch reads GGG. Residues 412 to 437 form a helical membrane-spanning segment; it reads VLQGSFTVMGVISGPLLGAFTLGMLL. Leu413 provides a ligand contact to iodide. Na(+) is bound by residues Ser416 and Phe417. An iodide-binding site is contributed by Phe417. At 438–441 the chain is on the cytoplasmic side; sequence PACN. Residues 442–465 form a helical membrane-spanning segment; that stretch reads TPGVLSGLAAGLAVSLWVAVGATL. Residues 466–520 are Extracellular-facing; the sequence is YPPGEQTMGVLPTSAAGCTNDSVLLGPPGATNASNGIPSSGMDTGRPALADTFYA. N-linked (GlcNAc...) asparagine glycans are attached at residues Asn485 and Asn497. Residues 521–545 traverse the membrane as a helical segment; it reads ISYLYYGALGTLTTMLCGALISYLT. Residues 546–618 are Cytoplasmic-facing; the sequence is GPTKRSSLGP…YLGHDVETNL (73 aa). At Ser551 the chain carries Phosphoserine; by PKA. A disordered region spans residues 587–618; that stretch reads EDIPAVTKKPPGLKPGAETHPLYLGHDVETNL.

Belongs to the sodium:solute symporter (SSF) (TC 2.A.21) family. Monomer.

It is found in the cell membrane. Its subcellular location is the cytoplasm. The catalysed reaction is iodide(out) + 2 Na(+)(out) = iodide(in) + 2 Na(+)(in). It catalyses the reaction chlorate(out) + 2 Na(+)(out) = chlorate(in) + 2 Na(+)(in). The enzyme catalyses thiocyanate(out) + 2 Na(+)(out) = thiocyanate(in) + 2 Na(+)(in). It carries out the reaction nitrate(out) + 2 Na(+)(out) = nitrate(in) + 2 Na(+)(in). The catalysed reaction is selenocyanate(out) + 2 Na(+)(out) = selenocyanate(in) + 2 Na(+)(in). Its activity is regulated as follows. Perchlorate inhibits iodide transport activity. Oxyanions inhibit iodide transport activity by blocking the binding sites for iodide and one of the sodium ions. Functionally, sodium:iodide symporter that mediates the transport of iodide into the thyroid gland. Can also mediate the transport of chlorate, thiocynate, nitrate and selenocynate. The sequence is that of Sodium/iodide cotransporter (Slc5a5) from Rattus norvegicus (Rat).